A 266-amino-acid chain; its full sequence is Energy-coupling factor transporter ATP-binding protein EcfA2 (266 aa).

The region spanning 3–238 (IEVVNVSHIF…YDPRFFTSKM (236 aa)) is the ABC transporter domain. 43-48 (GSGKST) is a binding site for ATP. Residue Glu164 is the Proton acceptor of the active site. A required for heterodimer formation region spans residues 220–266 (GTRMEFLEKYDPRFFTSKMLVMRRLVLKGEDPFSMSDDELLERVCNS).

Belongs to the ABC transporter superfamily. Energy-coupling factor EcfA family. As to quaternary structure, forms a heterodimer with EcfA1. Forms a stable energy-coupling factor (ECF) transporter complex composed of 2 membrane-embedded substrate-binding proteins (S component, RibU, BioY), 2 ATP-binding proteins (A component) and 2 transmembrane proteins (T component) upon coexpression in E.coli. Stable subcomplexes with both A plus T components can also be isolated. This complex interacts with at least 2 substrate-specific components, BioY and RibU.

Its subcellular location is the cell inner membrane. In terms of biological role, ATP-binding (A) component of a common energy-coupling factor (ECF) ABC-transporter complex. Unlike classic ABC transporters this ECF transporter provides the energy necessary to transport a number of different substrates. Expression of the complex plus RibU in E.coli allows riboflavin uptake; uptake does not occur in the absence of RibU or the EcfA1A2T complex. This chain is Energy-coupling factor transporter ATP-binding protein EcfA2 (ecfA2), found in Thermotoga maritima (strain ATCC 43589 / DSM 3109 / JCM 10099 / NBRC 100826 / MSB8).